Reading from the N-terminus, the 105-residue chain is Heat shock protein HspQ (105 aa).

Residues 80-105 form a disordered region; it reads AHPEQPSLDELAASIRHQLQAPHLRN.

This sequence belongs to the HspQ family.

It localises to the cytoplasm. Its function is as follows. Involved in the degradation of certain denaturated proteins, including DnaA, during heat shock stress. The protein is Heat shock protein HspQ of Yersinia pseudotuberculosis serotype O:1b (strain IP 31758).